The following is a 212-amino-acid chain: Redox-sensing transcriptional repressor Rex (212 aa).

The segment at residues 17–56 is a DNA-binding region (H-T-H motif); the sequence is LYYRIFKRFNTDGIEKASSKQIADALGIDSATVRRDFSYF. Position 91–96 (91–96) interacts with NAD(+); the sequence is GCGNIG.

Belongs to the transcriptional regulatory Rex family. Homodimer.

The protein localises to the cytoplasm. In terms of biological role, modulates transcription in response to changes in cellular NADH/NAD(+) redox state. This Streptococcus agalactiae serotype III (strain NEM316) protein is Redox-sensing transcriptional repressor Rex.